Consider the following 1083-residue polypeptide: Ubiquitin carboxyl-terminal hydrolase 1 (1083 aa).

The UBP-type zinc-finger motif lies at 30 to 165 (RSCVHFDKYV…KKDLLLEVVK (136 aa)). Residues C32, H34, C56, C59, C95, C98, C103, H115, H119, H125, C139, and C142 each contribute to the Zn(2+) site. The USP domain maps to 202–1083 (RGLVNLGNTC…EAYILFYERI (882 aa)). Catalysis depends on C211, which acts as the Nucleophile. Disordered regions lie at residues 387 to 424 (KDSE…DNET) and 450 to 486 (GSTE…ASGI). 2 stretches are compositionally biased toward basic and acidic residues: residues 409-419 (SDHKIQSRPET) and 455-473 (LMHD…EDVR). Positions 474–485 (ATQSNEETSASG) are enriched in polar residues. H1029 acts as the Proton acceptor in catalysis.

This sequence belongs to the peptidase C19 family.

It carries out the reaction Thiol-dependent hydrolysis of ester, thioester, amide, peptide and isopeptide bonds formed by the C-terminal Gly of ubiquitin (a 76-residue protein attached to proteins as an intracellular targeting signal).. Functionally, recognizes and hydrolyzes the peptide bond at the C-terminal Gly of ubiquitin. Involved in the processing of poly-ubiquitin precursors as well as that of ubiquitinated proteins. Is involved in resistance to the arginine analog canavanine (CAN). This is Ubiquitin carboxyl-terminal hydrolase 1 (UBP1) from Arabidopsis thaliana (Mouse-ear cress).